The primary structure comprises 215 residues: Imidazole glycerol phosphate synthase subunit HisH (215 aa).

A Glutamine amidotransferase type-1 domain is found at 9 to 215 (EVVLVDYGLG…QNFVDYCLER (207 aa)). Residue C85 is the Nucleophile of the active site. Active-site residues include H193 and E195.

Heterodimer of HisH and HisF.

Its subcellular location is the cytoplasm. It catalyses the reaction 5-[(5-phospho-1-deoxy-D-ribulos-1-ylimino)methylamino]-1-(5-phospho-beta-D-ribosyl)imidazole-4-carboxamide + L-glutamine = D-erythro-1-(imidazol-4-yl)glycerol 3-phosphate + 5-amino-1-(5-phospho-beta-D-ribosyl)imidazole-4-carboxamide + L-glutamate + H(+). It carries out the reaction L-glutamine + H2O = L-glutamate + NH4(+). It functions in the pathway amino-acid biosynthesis; L-histidine biosynthesis; L-histidine from 5-phospho-alpha-D-ribose 1-diphosphate: step 5/9. Its function is as follows. IGPS catalyzes the conversion of PRFAR and glutamine to IGP, AICAR and glutamate. The HisH subunit catalyzes the hydrolysis of glutamine to glutamate and ammonia as part of the synthesis of IGP and AICAR. The resulting ammonia molecule is channeled to the active site of HisF. The polypeptide is Imidazole glycerol phosphate synthase subunit HisH (Natronomonas pharaonis (strain ATCC 35678 / DSM 2160 / CIP 103997 / JCM 8858 / NBRC 14720 / NCIMB 2260 / Gabara) (Halobacterium pharaonis)).